The following is a 196-amino-acid chain: MAQLYFRYGTMNSGKSIEILKVAYNYEEQGKPVVLLTSRLDDRDEVGYISSRIGMRRKAYPIGNDTDIFDYIDDISPRPYCVLIDEAQFLTRANVYDLARIVDELDIPVMAFGLKNDFQNNLFEGSKYLLLLSDKIEEIKTICHYCSRKATMVLRMEDGEPVYEGVQVQIGGHESYISVCRKHWFNPPRERIVPLK.

ATP-binding positions include G9–S16 and D85–Q88. E86 functions as the Proton acceptor in the catalytic mechanism. C143, C146, C180, and H183 together coordinate Zn(2+).

It belongs to the thymidine kinase family. As to quaternary structure, homotetramer.

It localises to the cytoplasm. The catalysed reaction is thymidine + ATP = dTMP + ADP + H(+). The polypeptide is Thymidine kinase (Streptococcus thermophilus (strain CNRZ 1066)).